The following is a 479-amino-acid chain: Solute carrier family 7 member 13 (479 aa).

The Cytoplasmic portion of the chain corresponds to 1-14 (MAMDIEKKIYLKRQ). Residues 15-35 (LGYFWGTNFLIINIIGAGIFV) traverse the membrane as a helical segment. The Extracellular segment spans residues 36 to 47 (SPKGVLQYSSMN). Residues 48-68 (VGVSLCVWVFCAVLSMTSTLC) form a helical membrane-spanning segment. Residues 69–89 (AAEIGITFPYTVAHYYFLKRC) are Cytoplasmic-facing. The helical transmembrane segment at 90-110 (FGPFVAFLRLWTSLFTGPGVL) threads the bilayer. The Extracellular portion of the chain corresponds to 111–129 (ASQALLLAEYGIQPFYPSC). The helical transmembrane segment at 130–150 (SAPAVPKKCLALAMLWIVGIL) threads the bilayer. Over 151-165 (NSRGVKELSWLQTVS) the chain is Cytoplasmic. The chain crosses the membrane as a helical span at residues 166–186 (MVLKMGILSFISLSGLFLLVT). Residues 187 to 208 (GRKENVRRLQNAFDAEFPEVSR) lie on the Extracellular side of the membrane. The chain crosses the membrane as a helical span at residues 209-229 (LIEAIFQGYFAFSGGGSFTYV). At 230-242 (AGELKEPSKTIPR) the chain is on the cytoplasmic side. Residues 243-263 (CIFTALPLVTVVYLLANLSYL) form a helical membrane-spanning segment. Topologically, residues 264-289 (TVLSPQELLSSDAVALTWTDRVIPQL) are extracellular. A helical membrane pass occupies residues 290–310 (TWSVPFAISASLFSNLVTSVF). The Cytoplasmic portion of the chain corresponds to 311 to 338 (ETSRTSYIASRNGQLPLLCSTLNVHSSP). A helical membrane pass occupies residues 339–359 (FIAVLLDVSMGSIAIVLTNLI). Position 360 (E360) is a topological domain, extracellular. A helical transmembrane segment spans residues 361 to 381 (LINYLFFVFSIWTVLSVIGIL). Over 382 to 396 (KLRYQEPNLHRPYKV) the chain is Cytoplasmic. A helical transmembrane segment spans residues 397–417 (FSPFLFITAAISLSMVLIPLI). Residues 418–423 (KSPKMQ) are Extracellular-facing. A helical transmembrane segment spans residues 424–444 (YIYVFLFFLGGLLFYVPLIHF). Over 445–479 (KLKLIWFQKLTCYLQLLFNICIPDVSDEHVAEEES) the chain is Cytoplasmic.

It belongs to the amino acid-polyamine-organocation (APC) superfamily. In terms of assembly, disulfide-linked heterodimer composed of the catalytic light subunit SLC7A13 and the heavy subunit SLC3A1.

It is found in the apical cell membrane. It catalyses the reaction L-cystine(out) + L-aspartate(in) = L-cystine(in) + L-aspartate(out). The catalysed reaction is L-cystine(out) = L-cystine(in). The enzyme catalyses L-aspartate(in) + L-glutamate(out) = L-aspartate(out) + L-glutamate(in). It carries out the reaction L-aspartate(in) + L-glutamine(out) = L-aspartate(out) + L-glutamine(in). It catalyses the reaction L-aspartate(in) + L-methionine(out) = L-aspartate(out) + L-methionine(in). The catalysed reaction is L-leucine(out) + L-aspartate(in) = L-leucine(in) + L-aspartate(out). The enzyme catalyses L-valine(out) + L-aspartate(in) = L-valine(in) + L-aspartate(out). It carries out the reaction L-aspartate(in) + L-phenylalanine(out) = L-aspartate(out) + L-phenylalanine(in). It catalyses the reaction L-tyrosine(out) + L-aspartate(in) = L-tyrosine(in) + L-aspartate(out). The catalysed reaction is L-tryptophan(out) + L-aspartate(in) = L-tryptophan(in) + L-aspartate(out). In terms of biological role, associates with SLC3A1/rBAT to form a functional heterodimeric complex that transports anionic and neutral amino acids across the apical plasma membrane of renal epithelium. Preferentially mediates exchange transport, but can also operate via facilitated diffusion. May act as a major transporter for L-cystine in late proximal tubules, ensuring its reabsorption from the luminal fluid in exchange for cytosolic L-glutamate or L-aspartate. This is Solute carrier family 7 member 13 (Slc7a13) from Rattus norvegicus (Rat).